The following is a 174-amino-acid chain: Myosin regulatory light chain sqh (174 aa).

A Phosphothreonine modification is found at Thr-21. Ser-22 is subject to Phosphoserine. EF-hand domains follow at residues 31–66 (AQIAEFKEAFNMIDQNRDGFVEKEDLHDMLASLGKN) and 100–135 (DPEDVIKNAFGCFDEENMGVLPEDRLRELLTTMGDR). Ca(2+)-binding residues include Asp-44, Asn-46, Asp-48, and Asp-55.

Myosin is a hexamer of 2 heavy chains and 4 light chains. Post-translationally, phosphorylation plays a central role in myosin regulation.

Required for cytokinesis, could regulate contractile ring function. This is Myosin regulatory light chain sqh (sqh) from Drosophila melanogaster (Fruit fly).